The following is a 427-amino-acid chain: 3-phosphoshikimate 1-carboxyvinyltransferase (427 aa).

Positions 22, 23, and 27 each coordinate 3-phosphoshikimate. Residue K22 participates in phosphoenolpyruvate binding. Positions 96 and 124 each coordinate phosphoenolpyruvate. The 3-phosphoshikimate site is built by S169, S170, Q171, S197, D313, N336, and K340. Q171 lines the phosphoenolpyruvate pocket. D313 serves as the catalytic Proton acceptor. Phosphoenolpyruvate-binding residues include R344, R386, and K411.

Belongs to the EPSP synthase family. Monomer.

It localises to the cytoplasm. It carries out the reaction 3-phosphoshikimate + phosphoenolpyruvate = 5-O-(1-carboxyvinyl)-3-phosphoshikimate + phosphate. The protein operates within metabolic intermediate biosynthesis; chorismate biosynthesis; chorismate from D-erythrose 4-phosphate and phosphoenolpyruvate: step 6/7. Its function is as follows. Catalyzes the transfer of the enolpyruvyl moiety of phosphoenolpyruvate (PEP) to the 5-hydroxyl of shikimate-3-phosphate (S3P) to produce enolpyruvyl shikimate-3-phosphate and inorganic phosphate. In Salmonella agona (strain SL483), this protein is 3-phosphoshikimate 1-carboxyvinyltransferase.